Reading from the N-terminus, the 398-residue chain is CCA-adding enzyme (398 aa).

Residues glycine 32 and arginine 35 each contribute to the ATP site. Residues glycine 32 and arginine 35 each coordinate CTP. 2 residues coordinate Mg(2+): aspartate 45 and aspartate 47. 5 residues coordinate ATP: arginine 116, aspartate 159, arginine 162, arginine 165, and arginine 168. CTP-binding residues include arginine 116, aspartate 159, arginine 162, arginine 165, and arginine 168.

The protein belongs to the tRNA nucleotidyltransferase/poly(A) polymerase family. Bacterial CCA-adding enzyme type 3 subfamily. Homodimer. It depends on Mg(2+) as a cofactor.

It catalyses the reaction a tRNA precursor + 2 CTP + ATP = a tRNA with a 3' CCA end + 3 diphosphate. The enzyme catalyses a tRNA with a 3' CCA end + 2 CTP + ATP = a tRNA with a 3' CCACCA end + 3 diphosphate. In terms of biological role, catalyzes the addition and repair of the essential 3'-terminal CCA sequence in tRNAs without using a nucleic acid template. Adds these three nucleotides in the order of C, C, and A to the tRNA nucleotide-73, using CTP and ATP as substrates and producing inorganic pyrophosphate. tRNA 3'-terminal CCA addition is required both for tRNA processing and repair. Also involved in tRNA surveillance by mediating tandem CCA addition to generate a CCACCA at the 3' terminus of unstable tRNAs. While stable tRNAs receive only 3'-terminal CCA, unstable tRNAs are marked with CCACCA and rapidly degraded. This is CCA-adding enzyme from Lactobacillus johnsonii (strain CNCM I-12250 / La1 / NCC 533).